Reading from the N-terminus, the 100-residue chain is uncharacterized protein (100 aa).

This is an uncharacterized protein from Caulobacter vibrioides (strain ATCC 19089 / CIP 103742 / CB 15) (Caulobacter crescentus).